The following is an 88-amino-acid chain: Phosphocarrier protein HPr (88 aa).

In terms of domain architecture, HPr spans 1–88 (MEQNSYVIID…DVLSKEGLTK (88 aa)). His15 functions as the Pros-phosphohistidine intermediate in the catalytic mechanism. The residue at position 46 (Ser46) is a Phosphoserine; by HPrK/P.

The protein resides in the cytoplasm. Phosphorylation on Ser-46 inhibits the phosphoryl transfer from enzyme I to HPr. Its function is as follows. General (non sugar-specific) component of the phosphoenolpyruvate-dependent sugar phosphotransferase system (sugar PTS). This major carbohydrate active-transport system catalyzes the phosphorylation of incoming sugar substrates concomitantly with their translocation across the cell membrane. The phosphoryl group from phosphoenolpyruvate (PEP) is transferred to the phosphoryl carrier protein HPr by enzyme I. Phospho-HPr then transfers it to the PTS EIIA domain. P-Ser-HPr interacts with the catabolite control protein A (CcpA), forming a complex that binds to DNA at the catabolite response elements cre, operator sites preceding a large number of catabolite-regulated genes. Thus, P-Ser-HPr is a corepressor in carbon catabolite repression (CCR), a mechanism that allows bacteria to coordinate and optimize the utilization of available carbon sources. P-Ser-HPr also plays a role in inducer exclusion, in which it probably interacts with several non-PTS permeases and inhibits their transport activity. The polypeptide is Phosphocarrier protein HPr (ptsH) (Staphylococcus aureus (strain MSSA476)).